The chain runs to 149 residues: Probable ubiquitin-conjugating enzyme E2 12 (149 aa).

Basic and acidic residues predominate over residues 1 to 15; sequence MASKRISRELRDMQR. A disordered region spans residues 1–22; that stretch reads MASKRISRELRDMQRHPPANCS. The region spanning 1–148 is the UBC core domain; it reads MASKRISREL…AQKWTQKYAM (148 aa). Catalysis depends on C86, which acts as the Glycyl thioester intermediate.

Belongs to the ubiquitin-conjugating enzyme family. In terms of tissue distribution, ubiquitously expressed at very low levels.

It carries out the reaction S-ubiquitinyl-[E1 ubiquitin-activating enzyme]-L-cysteine + [E2 ubiquitin-conjugating enzyme]-L-cysteine = [E1 ubiquitin-activating enzyme]-L-cysteine + S-ubiquitinyl-[E2 ubiquitin-conjugating enzyme]-L-cysteine.. The protein operates within protein modification; protein ubiquitination. Accepts the ubiquitin from the E1 complex and catalyzes its covalent attachment to other proteins. The protein is Probable ubiquitin-conjugating enzyme E2 12 (UBC12) of Arabidopsis thaliana (Mouse-ear cress).